The following is a 406-amino-acid chain: Succinylornithine transaminase (406 aa).

K252 is subject to N6-(pyridoxal phosphate)lysine.

It belongs to the class-III pyridoxal-phosphate-dependent aminotransferase family. AstC subfamily. It depends on pyridoxal 5'-phosphate as a cofactor.

It carries out the reaction N(2)-succinyl-L-ornithine + 2-oxoglutarate = N-succinyl-L-glutamate 5-semialdehyde + L-glutamate. It participates in amino-acid degradation; L-arginine degradation via AST pathway; L-glutamate and succinate from L-arginine: step 3/5. Its function is as follows. Catalyzes the transamination of N(2)-succinylornithine and alpha-ketoglutarate into N(2)-succinylglutamate semialdehyde and glutamate. Can also act as an acetylornithine aminotransferase. This is Succinylornithine transaminase from Escherichia coli O7:K1 (strain IAI39 / ExPEC).